The primary structure comprises 490 residues: Putative alanine aminotransferase (490 aa).

A157, S158, Y183, N239, and S308 together coordinate pyridoxal 5'-phosphate. Residue K311 is modified to N6-(pyridoxal phosphate)lysine. A pyridoxal 5'-phosphate-binding site is contributed by R320.

The protein belongs to the class-I pyridoxal-phosphate-dependent aminotransferase family. Alanine aminotransferase subfamily. In terms of assembly, homodimer. The cofactor is pyridoxal 5'-phosphate.

Its subcellular location is the cytoplasm. It is found in the mitochondrion. It carries out the reaction L-alanine + 2-oxoglutarate = pyruvate + L-glutamate. Its pathway is amino-acid degradation; L-alanine degradation via transaminase pathway; pyruvate from L-alanine: step 1/1. Alanine aminotransferase involved in both alanine biosynthesis and utilization. In Schizosaccharomyces pombe (strain 972 / ATCC 24843) (Fission yeast), this protein is Putative alanine aminotransferase (alt1).